A 130-amino-acid chain; its full sequence is Mitochondrial pyruvate carrier 1 (130 aa).

Transmembrane regions (helical) follow at residues 23–45 and 55–77; these read LKYI…IAAI and ISGP…ALSV.

It belongs to the mitochondrial pyruvate carrier (MPC) (TC 2.A.105) family. In terms of assembly, the functional 150 kDa pyruvate import complex is a heteromer of MPC1 and either MPC2 or MPC3.

The protein resides in the mitochondrion. It is found in the mitochondrion inner membrane. In terms of biological role, mediates the uptake of pyruvate into mitochondria. In Saccharomyces cerevisiae (strain ATCC 204508 / S288c) (Baker's yeast), this protein is Mitochondrial pyruvate carrier 1.